A 152-amino-acid chain; its full sequence is Transcription factor ATOH7 (152 aa).

Residues 40-92 (RRRLAANARERRRMQGLNTAFDRLRRVVPQWGQDKKLSKYETLQMALSYIMAL) enclose the bHLH domain.

Forms a heterodimer with TCF3 isoform E47; interaction may be required for DNA-binding in certain situations.

Its subcellular location is the nucleus. It localises to the perikaryon. The protein localises to the cell projection. It is found in the axon. Functionally, transcription factor that binds to DNA at the consensus sequence 5'-CAG[GC]TG-3'. Dimerization with TCF3 isoform E47 may be required in certain situations. Binds to gene promoters and enhancer elements, and thereby regulates a transcriptional program of retinal ganglion cell (RGC) determinant genes. Although the exact mechanism is not certain, retinal transcription regulation by ATOH7 has a role in RGC determination and survival, photoreceptor population development, targeting of RGC axons to the optic nerve and development of the retino-hypothalamic tract. Binds to its own promoter and enhancer sequences, suggesting autoregulation of ATOH7 transcription. Required for retinal circadian rhythm photoentrainment. Plays a role in brainstem auditory signaling and binaural processing. The chain is Transcription factor ATOH7 from Homo sapiens (Human).